A 381-amino-acid chain; its full sequence is Prokineticin receptor 2 (381 aa).

Over 1-51 (MGPQNRNTSFAPDLNPPQDHVSLNYSYGDYDLPLGEDEDVTKTQTFFAAKI) the chain is Extracellular. Residues N7 and N24 are each glycosylated (N-linked (GlcNAc...) asparagine). Residues 52 to 72 (VIGVALAGIMLVCGIGNFVFI) form a helical membrane-spanning segment. Over 73-86 (AALARYKKLRNLTN) the chain is Cytoplasmic. A helical transmembrane segment spans residues 87 to 107 (LLIANLAISDFLVAIVCCPFE). Over 108-133 (MDYYVVRQLSWAHGHVLCASVNYLRT) the chain is Extracellular. C125 and C205 form a disulfide bridge. A helical membrane pass occupies residues 134–154 (VSLYVSTNALLAIAIDRYLAI). Residues 155–168 (VHPLKPRMNYQTAS) lie on the Cytoplasmic side of the membrane. The chain crosses the membrane as a helical span at residues 169–189 (FLIALVWMVSILIAVPSAYFT). The Extracellular segment spans residues 190–220 (TETILVIVKNQEKIFCGQIWSVDQQLYYKSY). Residues 221–241 (FLFVFGLEFVGPVVTMTLCYA) form a helical membrane-spanning segment. Residues 242 to 270 (RISQELWFKAVPGFQTEQIRKRLRCRRKT) are Cytoplasmic-facing. The helical transmembrane segment at 271–291 (VLLLMGILTAYVLCWAPFYGF) threads the bilayer. At 292 to 310 (TIVRDFFPTVVVKEKHYLT) the chain is on the extracellular side. The chain crosses the membrane as a helical span at residues 311 to 331 (AFYVVECIAMSNSMINTICFV). The Cytoplasmic segment spans residues 332–381 (TVKNNTMKYFKKMLRLHWRPSHYGSKSSADLDLKTSGVPATEEVDCIRLK).

This sequence belongs to the G-protein coupled receptor 1 family. In terms of assembly, homodimer. As to expression, expressed in several regions of the brain, including paraventricular hypothalamic nucleus, dorsal medial hypothalamic nucleus, paratenial thalamic nuclei, paracentral thalamic nucleus, lateral habenular nucleus, lateral septal nucleus, lateral globus pallidus and amygdala. Highest expression seen in paraventricular thalamic nuclei and is also extensively expressed in the suprachiasmatic nucleus.

The protein localises to the cell membrane. In terms of biological role, receptor for prokineticin 2. Exclusively coupled to the G(q) subclass of heteromeric G proteins. Activation leads to mobilization of calcium, stimulation of phosphoinositide turnover and activation of p44/p42 mitogen-activated protein kinase. The chain is Prokineticin receptor 2 (Prokr2) from Mus musculus (Mouse).